The sequence spans 324 residues: Signal peptidase I (324 aa).

The Periplasmic segment spans residues 1–3 (MAN). Residues 4 to 22 (MFALILVIATLVTGILWCV) form a helical membrane-spanning segment. The Cytoplasmic segment spans residues 23–58 (DKFVFAPKRRARQAAAQTASGDALDNATLNKVAPKP). A helical membrane pass occupies residues 59–77 (GWLETGASVFPVLAIVLIV). At 78 to 324 (RSFLYEPFQI…VRLSRIGGIH (247 aa)) the chain is on the periplasmic side. Residues Ser-91 and Lys-146 contribute to the active site.

The protein belongs to the peptidase S26 family.

The protein localises to the cell inner membrane. The catalysed reaction is Cleavage of hydrophobic, N-terminal signal or leader sequences from secreted and periplasmic proteins.. This chain is Signal peptidase I (lepB), found in Salmonella typhi.